A 459-amino-acid chain; its full sequence is tRNA(Ile2) 2-agmatinylcytidine synthetase TiaS (459 aa).

The segment at residues 282 to 360 is a DNA-binding region (OB); that stretch reads VRVRVWVASI…TINLEKLHII (79 aa).

It belongs to the TiaS family.

The protein localises to the cytoplasm. The enzyme catalyses cytidine(34) in tRNA(Ile2) + agmatine + ATP + H2O = 2-agmatinylcytidine(34) in tRNA(Ile2) + AMP + 2 phosphate + 2 H(+). Functionally, ATP-dependent agmatine transferase that catalyzes the formation of 2-agmatinylcytidine (agm2C) at the wobble position (C34) of tRNA(Ile2), converting the codon specificity from AUG to AUA. The protein is tRNA(Ile2) 2-agmatinylcytidine synthetase TiaS of Staphylothermus marinus (strain ATCC 43588 / DSM 3639 / JCM 9404 / F1).